The chain runs to 375 residues: Heat-inducible transcription repressor HrcA (375 aa).

Residues 307–318 (ATDGATHAAASS) show a composition bias toward low complexity. Residues 307 to 331 (ATDGATHAAASSQTENQSGDDTRQA) are disordered.

Belongs to the HrcA family.

Its function is as follows. Negative regulator of class I heat shock genes (grpE-dnaK-dnaJ and groELS operons). Prevents heat-shock induction of these operons. The polypeptide is Heat-inducible transcription repressor HrcA (Bifidobacterium adolescentis (strain ATCC 15703 / DSM 20083 / NCTC 11814 / E194a)).